The sequence spans 391 residues: tRNA-specific 2-thiouridylase MnmA (391 aa).

ATP is bound by residues 9–16 (GMSGGVDS) and methionine 35. An interaction with target base in tRNA region spans residues 95-97 (NPD). Cysteine 100 (nucleophile) is an active-site residue. Cysteine 100 and cysteine 196 are oxidised to a cystine. Glycine 124 contributes to the ATP binding site. The interval 146–148 (KDQ) is interaction with tRNA. The Cysteine persulfide intermediate role is filled by cysteine 196. The interval 308-309 (RY) is interaction with tRNA. Residues 372-382 (TGQPGQATSTG) show a composition bias toward polar residues. The disordered stretch occupies residues 372-391 (TGQPGQATSTGHAPALAEAR).

The protein belongs to the MnmA/TRMU family.

It localises to the cytoplasm. The enzyme catalyses S-sulfanyl-L-cysteinyl-[protein] + uridine(34) in tRNA + AH2 + ATP = 2-thiouridine(34) in tRNA + L-cysteinyl-[protein] + A + AMP + diphosphate + H(+). Its function is as follows. Catalyzes the 2-thiolation of uridine at the wobble position (U34) of tRNA, leading to the formation of s(2)U34. The sequence is that of tRNA-specific 2-thiouridylase MnmA from Burkholderia cenocepacia (strain ATCC BAA-245 / DSM 16553 / LMG 16656 / NCTC 13227 / J2315 / CF5610) (Burkholderia cepacia (strain J2315)).